Consider the following 550-residue polypeptide: Dihydroxy-acid dehydratase (550 aa).

Asp78 provides a ligand contact to Mg(2+). Cys119 serves as a coordination point for [2Fe-2S] cluster. Mg(2+)-binding residues include Asp120 and Lys121. Lys121 carries the N6-carboxylysine modification. Cys191 is a binding site for [2Fe-2S] cluster. Residue Glu440 coordinates Mg(2+). Ser466 serves as the catalytic Proton acceptor.

Belongs to the IlvD/Edd family. In terms of assembly, homodimer. The cofactor is [2Fe-2S] cluster. Requires Mg(2+) as cofactor.

It carries out the reaction (2R)-2,3-dihydroxy-3-methylbutanoate = 3-methyl-2-oxobutanoate + H2O. The catalysed reaction is (2R,3R)-2,3-dihydroxy-3-methylpentanoate = (S)-3-methyl-2-oxopentanoate + H2O. Its pathway is amino-acid biosynthesis; L-isoleucine biosynthesis; L-isoleucine from 2-oxobutanoate: step 3/4. It functions in the pathway amino-acid biosynthesis; L-valine biosynthesis; L-valine from pyruvate: step 3/4. Its function is as follows. Functions in the biosynthesis of branched-chain amino acids. Catalyzes the dehydration of (2R,3R)-2,3-dihydroxy-3-methylpentanoate (2,3-dihydroxy-3-methylvalerate) into 2-oxo-3-methylpentanoate (2-oxo-3-methylvalerate) and of (2R)-2,3-dihydroxy-3-methylbutanoate (2,3-dihydroxyisovalerate) into 2-oxo-3-methylbutanoate (2-oxoisovalerate), the penultimate precursor to L-isoleucine and L-valine, respectively. The protein is Dihydroxy-acid dehydratase of Methanococcus maripaludis (strain C6 / ATCC BAA-1332).